We begin with the raw amino-acid sequence, 235 residues long: Glycerol-3-phosphate acyltransferase (235 aa).

Helical transmembrane passes span 4–24 (LIAILAISYLVGAIPTGIMAG), 56–76 (AVTLLDILKGIVAAVSIVAFF), 94–114 (LLAGMSAVIGHVFTVFAGFKG), 122–142 (AGMLIGIAPVSMLIVIGIFLL), 152–172 (VASILAAIAFPLIIAIRKYIF), and 191–211 (FHDSLDYHLMIFGLIVALAIL).

It belongs to the PlsY family. Probably interacts with PlsX.

Its subcellular location is the cell inner membrane. The catalysed reaction is an acyl phosphate + sn-glycerol 3-phosphate = a 1-acyl-sn-glycero-3-phosphate + phosphate. The protein operates within lipid metabolism; phospholipid metabolism. Functionally, catalyzes the transfer of an acyl group from acyl-phosphate (acyl-PO(4)) to glycerol-3-phosphate (G3P) to form lysophosphatidic acid (LPA). This enzyme utilizes acyl-phosphate as fatty acyl donor, but not acyl-CoA or acyl-ACP. The polypeptide is Glycerol-3-phosphate acyltransferase (Chlorobium phaeobacteroides (strain DSM 266 / SMG 266 / 2430)).